A 486-amino-acid chain; its full sequence is MTAISNHIDTIIKLNPDYTQMDAVYLTNKLLNLIGDAALELPGDTDPLTNLDLMVKAAQDNGKIPDSQAARQILEAQLMDFATPTPSRINQLFWDKYQAGPRVATDWFFALSRANNYIQTRAIAKNVVFPAKTEYGDLEITINLSKPEKDPKDIAAAAHATQSGYPACALCLQTEGYAGRTDFAARTNHRVIRFLLGGKTWGFQYSPYAYFNEHAIFLDAIHEPMVIDQSTFSNLLNIVTMFPTYFVGSNADLPIVGGSMLAHEHYQGGRHTFPMAKAPIETQVEISGHPHVFAGIVKWPMSVIRLVSADSDELINAAEHVRQVWNQYTDETVDVRAFVDGKPHHTVTPIARRVGTEFQLDLVLRDNQTSAQYPDGIFHPHQDVQHIKKENIGLIEVMGRAILPARLKSELAEVQKYLLGEANTMKPMHQAWADQLKAKYDWTPANAEIQMQAAVGRVFARVLEDAGVFKRDEVGQKAFARFCRAL.

The protein belongs to the galactose-1-phosphate uridylyltransferase type 2 family.

Its subcellular location is the cytoplasm. The enzyme catalyses alpha-D-galactose 1-phosphate + UDP-alpha-D-glucose = alpha-D-glucose 1-phosphate + UDP-alpha-D-galactose. It functions in the pathway carbohydrate metabolism; galactose metabolism. This Lacticaseibacillus paracasei (strain ATCC 334 / BCRC 17002 / CCUG 31169 / CIP 107868 / KCTC 3260 / NRRL B-441) (Lactobacillus paracasei) protein is Galactose-1-phosphate uridylyltransferase.